We begin with the raw amino-acid sequence, 252 residues long: 5-oxoprolinase subunit A (252 aa).

It belongs to the LamB/PxpA family. Forms a complex composed of PxpA, PxpB and PxpC.

The enzyme catalyses 5-oxo-L-proline + ATP + 2 H2O = L-glutamate + ADP + phosphate + H(+). Catalyzes the cleavage of 5-oxoproline to form L-glutamate coupled to the hydrolysis of ATP to ADP and inorganic phosphate. In Mycolicibacterium gilvum (strain PYR-GCK) (Mycobacterium gilvum (strain PYR-GCK)), this protein is 5-oxoprolinase subunit A.